The primary structure comprises 128 residues: MSTEDLYQEDVEMLDDYEDPSTEQHWSEEDGEPSGYATAEPDDHAAQEEQDEPPALDSLALDLTLRCGELRLTLAELRRLDAGTILEVTGISPGHATLCHGEQVVAEGELVDVEGRLGLQITRLVTRS.

A compositionally biased stretch (acidic residues) spans methionine 1–serine 21. Residues methionine 1–aspartate 57 form a disordered region. The hrcQb-C stretch occupies residues glutamine 50–serine 128. The interval arginine 78–aspartate 81 is dimer-dimer interface.

The protein belongs to the FliN/MopA/SpaO family. As to quaternary structure, homotetramer. The four monomers assemble into two tightly bound homodimers. Interacts with HrcQa.

The protein resides in the cytoplasm. In terms of biological role, component of the type III secretion system, which is required for effector protein delivery, parasitism, and pathogenicity. Probably participates in the formation of a C-ring-like assembly along with HrcQa. This Pseudomonas savastanoi pv. phaseolicola (Pseudomonas syringae pv. phaseolicola) protein is Type III secretion protein HrcQb (hrcQb).